The primary structure comprises 1401 residues: DNA polymerase III PolC-type (1401 aa).

One can recognise an Exonuclease domain in the interval 388-543 (FVVFDIETTG…EDAKATAEIF (156 aa)).

It belongs to the DNA polymerase type-C family. PolC subfamily.

The protein resides in the cytoplasm. It catalyses the reaction DNA(n) + a 2'-deoxyribonucleoside 5'-triphosphate = DNA(n+1) + diphosphate. Required for replicative DNA synthesis. This DNA polymerase also exhibits 3' to 5' exonuclease activity. The protein is DNA polymerase III PolC-type of Caldanaerobacter subterraneus subsp. tengcongensis (strain DSM 15242 / JCM 11007 / NBRC 100824 / MB4) (Thermoanaerobacter tengcongensis).